The sequence spans 629 residues: Phosphomethylpyrimidine synthase (629 aa).

Residues N215, M244, Y273, H309, 329–331 (SRG), 370–373 (DGLR), and E409 contribute to the substrate site. Residue H413 coordinates Zn(2+). Y436 is a substrate binding site. H477 is a binding site for Zn(2+). C557, C560, and C565 together coordinate [4Fe-4S] cluster. The tract at residues 589–610 (ENIKRETSAEEAEEAREGMSDM) is disordered.

The protein belongs to the ThiC family. As to quaternary structure, homodimer. It depends on [4Fe-4S] cluster as a cofactor.

It carries out the reaction 5-amino-1-(5-phospho-beta-D-ribosyl)imidazole + S-adenosyl-L-methionine = 4-amino-2-methyl-5-(phosphooxymethyl)pyrimidine + CO + 5'-deoxyadenosine + formate + L-methionine + 3 H(+). The protein operates within cofactor biosynthesis; thiamine diphosphate biosynthesis. Catalyzes the synthesis of the hydroxymethylpyrimidine phosphate (HMP-P) moiety of thiamine from aminoimidazole ribotide (AIR) in a radical S-adenosyl-L-methionine (SAM)-dependent reaction. The sequence is that of Phosphomethylpyrimidine synthase from Erythrobacter litoralis (strain HTCC2594).